The chain runs to 206 residues: Cytochrome b-245 chaperone 1 homolog (206 aa).

Residues 21–43 (GIRSWSILVGIASVGLAAAYYSS) traverse the membrane as a helical segment. The tract at residues 172–206 (ADDDYPDDDDGIEDLGLGDSSDSQDDPDGDDDEEH) is disordered. 2 stretches are compositionally biased toward acidic residues: residues 174-184 (DDYPDDDDGIE) and 193-206 (DSQD…DEEH).

It belongs to the CYBC1 family.

It localises to the endoplasmic reticulum membrane. Functions as a chaperone necessary for a stable expression of the CYBA and CYBB subunits of the cytochrome b-245 heterodimer. In Danio rerio (Zebrafish), this protein is Cytochrome b-245 chaperone 1 homolog.